The primary structure comprises 475 residues: Ribulose bisphosphate carboxylase large chain (475 aa).

Residues 1-2 (MS) constitute a propeptide that is removed on maturation. Position 3 is an N-acetylproline (P3). K14 bears the N6,N6,N6-trimethyllysine mark. 2 residues coordinate substrate: N123 and T173. K175 acts as the Proton acceptor in catalysis. Residue K177 coordinates substrate. Mg(2+)-binding residues include K201, D203, and E204. The residue at position 201 (K201) is an N6-carboxylysine. The active-site Proton acceptor is the H294. R295, H327, and S379 together coordinate substrate.

It belongs to the RuBisCO large chain family. Type I subfamily. As to quaternary structure, heterohexadecamer of 8 large chains and 8 small chains; disulfide-linked. The disulfide link is formed within the large subunit homodimers. Mg(2+) is required as a cofactor. In terms of processing, the disulfide bond which can form in the large chain dimeric partners within the hexadecamer appears to be associated with oxidative stress and protein turnover.

The protein resides in the plastid. It is found in the chloroplast. It catalyses the reaction 2 (2R)-3-phosphoglycerate + 2 H(+) = D-ribulose 1,5-bisphosphate + CO2 + H2O. The catalysed reaction is D-ribulose 1,5-bisphosphate + O2 = 2-phosphoglycolate + (2R)-3-phosphoglycerate + 2 H(+). Functionally, ruBisCO catalyzes two reactions: the carboxylation of D-ribulose 1,5-bisphosphate, the primary event in carbon dioxide fixation, as well as the oxidative fragmentation of the pentose substrate in the photorespiration process. Both reactions occur simultaneously and in competition at the same active site. This chain is Ribulose bisphosphate carboxylase large chain, found in Pinus thunbergii (Japanese black pine).